The chain runs to 330 residues: Transcription factor TGA6 (330 aa).

Residues 1–13 are compositionally biased toward polar residues; the sequence is MADTSSRTDVSTD. The disordered stretch occupies residues 1-45; that stretch reads MADTSSRTDVSTDGDTDHRDLGSDRGHMHAAASDSSDRSKDKLDQ. 2 stretches are compositionally biased toward basic and acidic residues: residues 15-27 and 35-45; these read DTDH…DRGH and SSDRSKDKLDQ. One can recognise a bZIP domain in the interval 44–107; it reads DQKTLRRLAQ…SSGDQAHSTG (64 aa). Coiled-coil stretches lie at residues 45–142 and 217–233; these read QKTL…HAGD and INSL…ALSQ. The segment at 46 to 66 is basic motif; that stretch reads KTLRRLAQNREAARKSRLRKK. Residues 72-86 form a leucine-zipper region; it reads LENSRLKLTQLEQEL. Residues 111-327 enclose the DOG1 domain; the sequence is ALAFDAEHSR…RALSSLWLAR (217 aa).

The protein belongs to the bZIP family. As to quaternary structure, binds DNA as a dimer. Interacts with NPR1, NPR3 and NPR4. Interacts with GRXC9/GRX480. In terms of tissue distribution, expressed predominantly in roots and flowers.

It localises to the nucleus. Functionally, transcriptional activator that binds specifically to the DNA sequence 5'-TGACG-3'. Recognizes ocs elements like the as-1 motif of the cauliflower mosaic virus 35S promoter. Binding to the as-1-like cis elements mediate auxin- and salicylic acid-inducible transcription. May be involved in the induction of the systemic acquired resistance (SAR) via its interaction with NPR1. Could also bind to the Hex-motif (5'-TGACGTGG-3') another cis-acting element found in plant histone promoters. The protein is Transcription factor TGA6 (TGA6) of Arabidopsis thaliana (Mouse-ear cress).